We begin with the raw amino-acid sequence, 223 residues long: UPF0641 membrane protein PJ4664.05 (223 aa).

The next 5 membrane-spanning stretches (helical) occupy residues 10–30 (FNSFILHTVATANLIWAFNWI), 49–69 (LTVLSLAVTLLSMVVGLFSDI), 81–101 (ILLYIVCPLETIVSILYWSIV), 146–166 (LSIGPSLLVYLSIAVSYMLWV), and 190–210 (TIFYTVASIISFSCYIVLKMV).

This sequence belongs to the UPF0641 family.

Its subcellular location is the endoplasmic reticulum membrane. In Schizosaccharomyces pombe (strain 972 / ATCC 24843) (Fission yeast), this protein is UPF0641 membrane protein PJ4664.05.